The following is a 248-amino-acid chain: Peroxisomal membrane protein 11A (248 aa).

At Met-1–Glu-97 the chain is on the cytoplasmic side. A helical membrane pass occupies residues Leu-98 to Ile-118. Residues Trp-119–Lys-220 are Lumenal-facing. The chain crosses the membrane as a helical span at residues Gly-221 to Thr-241. Residues His-242 to Cys-248 are Cytoplasmic-facing.

It belongs to the peroxin-11 family. Homooligomer. Interacts with ARC5 and FIS1B on peroxisomes. Expressed in developing siliques.

The protein localises to the peroxisome membrane. Its function is as follows. Involved in peroxisomal proliferation. Promotes peroxisomal duplication, aggregation or elongation without fission. The chain is Peroxisomal membrane protein 11A (PEX11A) from Arabidopsis thaliana (Mouse-ear cress).